The following is a 450-amino-acid chain: MVRRKRQEEDEKIEIERVKEESLKLAKQAEEKRRLEESKEQGKRIQVDDDQLAKTTSKDKGQINHSKDVVEEDVNPPPSIDGKSEIGDGTSVNPRCLCCFHCHRPFVMHEILKKGKFHIDCYKEYYRNRNCYVCQQKIPVNAEGIRKFSEHPFWKEKYCPIHDEDGTAKCCSCERLEPRGTNYVMLGDFRWLCIECMGSAVMDTNEVQPLHFEIREFFEGLFLKVDKEFALLLVEKQALNKAEEEEKIDYHRAAVTRGLCMSEEQIVPSIIKGPRMGPDNQLITDIVTESQRVSGFEVTGILIIYGLPRLLTGYILAHEMMHAWLRLNGYKNLKLELEEGLCQALGLRWLESQTFASTDAAAAAAVASSSSFSSSTAPPAAITSKKSDDWSIFEKKLVEFCMNQIKEDDSPVYGLGFKQVYEMMVSNNYNIKDTLKDIVSASNATPDSTV.

Residues 1–46 (MVRRKRQEEDEKIEIERVKEESLKLAKQAEEKRRLEESKEQGKRIQ) are a coiled coil. Composition is skewed to basic and acidic residues over residues 27-47 (KQAEEKRRLEESKEQGKRIQV) and 56-69 (TSKDKGQINHSKDV). Positions 27 to 87 (KQAEEKRRLE…PSIDGKSEIG (61 aa)) are disordered.

The chain is Protein DA1-related 3 (DAR3) from Arabidopsis thaliana (Mouse-ear cress).